Here is a 435-residue protein sequence, read N- to C-terminus: Glutamate-1-semialdehyde 2,1-aminomutase (435 aa).

The residue at position 269 (K269) is an N6-(pyridoxal phosphate)lysine.

The protein belongs to the class-III pyridoxal-phosphate-dependent aminotransferase family. HemL subfamily. In terms of assembly, homodimer. Pyridoxal 5'-phosphate serves as cofactor.

It localises to the cytoplasm. The enzyme catalyses (S)-4-amino-5-oxopentanoate = 5-aminolevulinate. The protein operates within porphyrin-containing compound metabolism; protoporphyrin-IX biosynthesis; 5-aminolevulinate from L-glutamyl-tRNA(Glu): step 2/2. This chain is Glutamate-1-semialdehyde 2,1-aminomutase, found in Gemmatimonas aurantiaca (strain DSM 14586 / JCM 11422 / NBRC 100505 / T-27).